The primary structure comprises 316 residues: Thymidylate synthase (316 aa).

DUMP contacts are provided by residues Arg-23 and 178 to 179 (RR). Cys-198 (nucleophile) is an active-site residue. Residues 218 to 221 (RSGD), Asn-229, and 259 to 261 (HIY) contribute to the dUMP site. Residue Asp-221 participates in (6R)-5,10-methylene-5,6,7,8-tetrahydrofolate binding. (6R)-5,10-methylene-5,6,7,8-tetrahydrofolate is bound at residue Ala-315.

This sequence belongs to the thymidylate synthase family. Bacterial-type ThyA subfamily. In terms of assembly, homodimer.

The protein localises to the cytoplasm. The enzyme catalyses dUMP + (6R)-5,10-methylene-5,6,7,8-tetrahydrofolate = 7,8-dihydrofolate + dTMP. Its pathway is pyrimidine metabolism; dTTP biosynthesis. In terms of biological role, catalyzes the reductive methylation of 2'-deoxyuridine-5'-monophosphate (dUMP) to 2'-deoxythymidine-5'-monophosphate (dTMP) while utilizing 5,10-methylenetetrahydrofolate (mTHF) as the methyl donor and reductant in the reaction, yielding dihydrofolate (DHF) as a by-product. This enzymatic reaction provides an intracellular de novo source of dTMP, an essential precursor for DNA biosynthesis. The sequence is that of Thymidylate synthase from Lactiplantibacillus plantarum (strain ATCC BAA-793 / NCIMB 8826 / WCFS1) (Lactobacillus plantarum).